Reading from the N-terminus, the 226-residue chain is Neuron-specific vesicular protein calcyon (226 aa).

A disordered region spans residues 1-21; that stretch reads MVKLGCSFSGKPGKEAGDQDG. The Extracellular segment spans residues 1 to 88; the sequence is MVKLGCSFSG…EEGRRLPTAR (88 aa). Residues 89 to 109 traverse the membrane as a helical segment; it reads MIAFAMALLGCVLIMYKAIWY. Residues 110–226 are Cytoplasmic-facing; sequence DQFTCPDGFL…AEGVPSQPPK (117 aa). The tract at residues 177–226 is disordered; that stretch reads HKGTTPAAMAVSTAAAAAAAEGTEPSGKSLDTREKEDPQKAEGVPSQPPK. Low complexity predominate over residues 183-196; it reads AAMAVSTAAAAAAA. The span at 206–216 shows a compositional bias: basic and acidic residues; sequence LDTREKEDPQK.

The protein belongs to the NSG family. In terms of assembly, interacts with CLTA. As to expression, most abundant in brain. Also expressed in testis and ovary and, at much lower levels, in kidney and heart.

It localises to the cytoplasmic vesicle membrane. The protein resides in the cell membrane. Functionally, interacts with clathrin light chain A and stimulates clathrin self-assembly and clathrin-mediated endocytosis. This is Neuron-specific vesicular protein calcyon (Caly) from Mus musculus (Mouse).